Here is a 358-residue protein sequence, read N- to C-terminus: G-protein coupled receptor 87 (358 aa).

The Extracellular portion of the chain corresponds to 1–47; that stretch reads MGLNLTLTKLPGNELYSQASHTANSTSEGHGKNSTLHNKFDTIILPV. N-linked (GlcNAc...) asparagine glycosylation is found at Asn-4, Asn-24, and Asn-33. A helical membrane pass occupies residues 48 to 68; that stretch reads LYLVIFVASILLNGLAVWIFF. Over 69–75 the chain is Cytoplasmic; it reads HIRNKTS. Residues 76–96 traverse the membrane as a helical segment; the sequence is FIFYLKNIVVADLIMTLTFPF. Topologically, residues 97 to 116 are extracellular; it reads RIVRDAGFGPWYFEFILCRY. The cysteines at positions 114 and 192 are disulfide-linked. Residues 117–137 traverse the membrane as a helical segment; that stretch reads TSVLFYANMYTSIVFLGLISV. Residues 138-159 lie on the Cytoplasmic side of the membrane; it reads DRYLKVVKPFGDSRMYSITFTK. A helical membrane pass occupies residues 160–180; sequence VLSVCVWVIMAILSLPNIILT. Residues 181–208 are Extracellular-facing; that stretch reads NGQPTKENIHDCMKLKSPLGAKWHMAVT. A helical membrane pass occupies residues 209-229; the sequence is YVDSCLFVAVLVILIGCYIAI. The Cytoplasmic portion of the chain corresponds to 230 to 256; it reads SRYIHKSSRQFISQSSRKRKHNQSIRV. A helical transmembrane segment spans residues 257-277; that stretch reads VVAVFFTCFLPYHLCRIPFTF. Residues 278–297 are Extracellular-facing; it reads SNLDRLLDESAHKILYYCKE. Residues 298–318 form a helical membrane-spanning segment; the sequence is MTLFLSACNVCLDPIIYFFMC. Topologically, residues 319-358 are cytoplasmic; the sequence is KSFSRRLFKKSNIRTRSESIRSLQSVRRSEVRIYYDYTDV.

It belongs to the G-protein coupled receptor 1 family. Expressed at high levels in testis and brain and to a lesser extent placenta, ovary, prostate, and skeletal muscle but not in heart, lung, kidney, liver or intestine.

It localises to the cell membrane. Receptor for lysophosphatidic acid (LPA). Necessary for p53/TP53-dependent survival in response to DNA damage. Promotes the Hippo-YAP signaling pathway and thereby modulates glycolysis and oxidative stress production by the regulation of hexokinase-2/HK2. In Mus musculus (Mouse), this protein is G-protein coupled receptor 87 (Gpr87).